Here is a 324-residue protein sequence, read N- to C-terminus: Acetyl-coenzyme A carboxylase carboxyl transferase subunit alpha (324 aa).

Positions 44–298 (ILQRKLLNLK…KNKIRDQLDF (255 aa)) constitute a CoA carboxyltransferase C-terminal domain.

The protein belongs to the AccA family. In terms of assembly, acetyl-CoA carboxylase is a heterohexamer composed of biotin carboxyl carrier protein (accB), biotin carboxylase (accC) and two subunits each of ACCase subunit alpha (accA) and ACCase subunit beta (accD).

It localises to the plastid. The protein resides in the chloroplast. It catalyses the reaction N(6)-carboxybiotinyl-L-lysyl-[protein] + acetyl-CoA = N(6)-biotinyl-L-lysyl-[protein] + malonyl-CoA. It functions in the pathway lipid metabolism; malonyl-CoA biosynthesis; malonyl-CoA from acetyl-CoA: step 1/1. Functionally, component of the acetyl coenzyme A carboxylase (ACC) complex. First, biotin carboxylase catalyzes the carboxylation of biotin on its carrier protein (BCCP) and then the CO(2) group is transferred by the carboxyltransferase to acetyl-CoA to form malonyl-CoA. The protein is Acetyl-coenzyme A carboxylase carboxyl transferase subunit alpha of Cyanidium caldarium (Red alga).